A 105-amino-acid polypeptide reads, in one-letter code: Protein SMALL AUXIN UP-REGULATED RNA 16 (105 aa).

Belongs to the ARG7 family. As to expression, expressed in etiolated hypocotyls, cotyledons, leaves, flowers and siliques.

The protein resides in the cell membrane. Provide a mechanistic link between auxin and plasma membrane H(+)-ATPases (PM H(+)-ATPases, e.g. AHA1 and AHA2), and triggers PM H(+)-ATPases activity by promoting phosphorylation of their C-terminal autoinhibitory domain as a result of PP2C-D subfamily of type 2C phosphatases inhibition, thus leading to the acidification of the apoplast and the facilitation of solutes and water uptake to drive cell expansion. Triggers plant growth probably by promoting cell elongation. Regulates branch angles and bending. This Arabidopsis thaliana (Mouse-ear cress) protein is Protein SMALL AUXIN UP-REGULATED RNA 16.